A 320-amino-acid chain; its full sequence is Polyketide transferase FFUJ_12241 (320 aa).

Positions 58-298 (RDITCLAWDP…ILKGKGHLDW (241 aa)) are abhydrolase domain.

This sequence belongs to the polyketide transferase af380 family.

Polyketide transferase; part of the gene cluster that mediates the biosynthesis of fujikurins A-D, secondary metabolites playing a role during rice infection. The polyketide synthase PKS19 acts with the trans-enoyl reductase FFUJ_12240 and the polyketide transferase FFUJ_12241 to produce fujikurins, however, the biosynthesis pathway has not been identified yet. The sequence is that of Polyketide transferase FFUJ_12241 from Gibberella fujikuroi (strain CBS 195.34 / IMI 58289 / NRRL A-6831) (Bakanae and foot rot disease fungus).